The chain runs to 295 residues: Glutamyl-Q tRNA(Asp) synthetase (295 aa).

L-glutamate-binding positions include 5–9 and Glu41; that span reads RFAPS. The 'HIGH' region signature appears at 8 to 18; sequence PSPTGLLHIGS. Zn(2+) is bound by residues Cys97, Cys99, Tyr117, and Cys121. 2 residues coordinate L-glutamate: Tyr178 and Arg196. The short motif at 234–238 is the 'KMSKS' region element; it reads KWSKQ. Lys237 contributes to the ATP binding site.

The protein belongs to the class-I aminoacyl-tRNA synthetase family. GluQ subfamily. Zn(2+) serves as cofactor.

In terms of biological role, catalyzes the tRNA-independent activation of glutamate in presence of ATP and the subsequent transfer of glutamate onto a tRNA(Asp). Glutamate is transferred on the 2-amino-5-(4,5-dihydroxy-2-cyclopenten-1-yl) moiety of the queuosine in the wobble position of the QUC anticodon. The protein is Glutamyl-Q tRNA(Asp) synthetase of Neisseria meningitidis serogroup A / serotype 4A (strain DSM 15465 / Z2491).